Reading from the N-terminus, the 199-residue chain is Peroxiredoxin-1 (199 aa).

The Thioredoxin domain occupies 6-165; the sequence is AYIGKLAPDF…TLRLVQAFQF (160 aa). Cys52 (cysteine sulfenic acid (-SOH) intermediate) is an active-site residue.

It belongs to the peroxiredoxin family. AhpC/Prx1 subfamily. In terms of assembly, homodimer; disulfide-linked, upon oxidation. 5 homodimers assemble to form a ring-like decamer. Interacts with GDPD5; forms a mixed-disulfide with GDPD5. Interacts with SESN1 and SESN2. Interacts with FAM107A. The enzyme can be inactivated by further oxidation of the cysteine sulfenic acid (C(P)-SOH) to sulphinic acid (C(P)-SO2H) instead of its condensation to a disulfide bond. It can be reactivated by forming a transient disulfide bond with sulfiredoxin SRXN1, which reduces the cysteine sulfinic acid in an ATP- and Mg-dependent manner.

It is found in the cytoplasm. The catalysed reaction is a hydroperoxide + [thioredoxin]-dithiol = an alcohol + [thioredoxin]-disulfide + H2O. Thiol-specific peroxidase that catalyzes the reduction of hydrogen peroxide and organic hydroperoxides to water and alcohols, respectively. Plays a role in cell protection against oxidative stress by detoxifying peroxides and as sensor of hydrogen peroxide-mediated signaling events. Might participate in the signaling cascades of growth factors and tumor necrosis factor-alpha by regulating the intracellular concentrations of H(2)O(2). Reduces an intramolecular disulfide bond in GDPD5 that gates the ability to GDPD5 to drive postmitotic motor neuron differentiation. This is Peroxiredoxin-1 (PRDX1) from Gekko japonicus (Schlegel's Japanese gecko).